We begin with the raw amino-acid sequence, 120 residues long: MHETDMTKALIMTIQDWFDQQVEKPQITKIHLLVGQFTCVEPVSLQFAFEVQTKQTFLNGAELVIKDVPLVAYCHTCQTEYSPEIGLQYSCPTCRSPMDDIRSGRELKIDRIEHHQCTPA.

His2, Glu3, and Glu41 together coordinate Ni(2+). Residues Cys74, Cys77, Cys91, and Cys94 each contribute to the Zn(2+) site.

It belongs to the HypA/HybF family.

In terms of biological role, involved in the maturation of the nickel-dependent guanidine hydrolase GdmH. Required for nickel insertion into the metal center of GdmH. Seems to be required only for GdmH activation and not for activity. The chain is Guanidine hydrolase-activating protein A from Synechocystis sp. (strain ATCC 27184 / PCC 6803 / Kazusa).